Reading from the N-terminus, the 368-residue chain is Ferrochelatase (368 aa).

2 residues coordinate Fe cation: His209 and Glu290. The tract at residues 341-368 (ADLGGGREATGQAAERSRQRALALGAKQ) is disordered.

The protein belongs to the ferrochelatase family.

It is found in the cytoplasm. The catalysed reaction is heme b + 2 H(+) = protoporphyrin IX + Fe(2+). It participates in porphyrin-containing compound metabolism; protoheme biosynthesis; protoheme from protoporphyrin-IX: step 1/1. Catalyzes the ferrous insertion into protoporphyrin IX. The sequence is that of Ferrochelatase from Nitrosococcus oceani (strain ATCC 19707 / BCRC 17464 / JCM 30415 / NCIMB 11848 / C-107).